Reading from the N-terminus, the 205-residue chain is TATA-box-binding protein (205 aa).

Repeat copies occupy residues 27–103 and 117–194.

Belongs to the TBP family. Belongs to the TFIID complex together with the TBP-associated factors (TAFs). Binds DNA as monomer.

Its subcellular location is the nucleus. In terms of biological role, general transcription factor that functions at the core of the DNA-binding multiprotein factor TFIID. Binding of TFIID to the TATA box is the initial transcriptional step of the pre-initiation complex (PIC), playing a role in the activation of eukaryotic genes transcribed by RNA polymerase II. The sequence is that of TATA-box-binding protein (tbpA) from Dictyostelium discoideum (Social amoeba).